A 953-amino-acid polypeptide reads, in one-letter code: Anion exchange protein 4 (953 aa).

A disordered region spans residues 20–41 (SEQLDGDLGPGSGLDGPSDIDN). The next 4 membrane-spanning stretches (helical) occupy residues 385–405 (AVLY…GLLG), 413–433 (GVLE…LMAG), 470–490 (VGIW…SLLV), and 501–521 (FCAL…LNLI). Residues 385-953 (AVLYIYLATV…KAPEINISVN (569 aa)) are membrane (anion exchange). Asn-546 and Asn-570 each carry an N-linked (GlcNAc...) asparagine glycan. 7 consecutive transmembrane segments (helical) span residues 594–614 (VPDI…CAIA), 635–655 (FSSV…GLAT), 682–702 (PWWL…LIFM), 728–748 (LFCV…WYVS), 785–805 (GLVV…LKFI), 807–827 (MPVL…SMQF), and 869–889 (LWVI…LGLV). Basic and acidic residues predominate over residues 916 to 927 (KTIPENRPEPEH). The tract at residues 916 to 938 (KTIPENRPEPEHLFSGNDSENSE) is disordered. N-linked (GlcNAc...) asparagine glycosylation is found at Asn-932 and Asn-949.

The protein belongs to the anion exchanger (TC 2.A.31) family. In terms of tissue distribution, expressed in kidney and gastrointestinal tract. In kidney, it is highly expressed in the cortex, expressed at intermediate level in the outer medulla and not expressed in the inner medulla. It is expressed in the cecum, while it is absent in other segments of gastrointestinal tract. Highly expressed in the cortical collecting duct (CCD). Expressed in both alpha-intercalated cells and beta-intercalated cells in the CCD (at protein level).

It localises to the basolateral cell membrane. It carries out the reaction 2 hydrogencarbonate(out) + chloride(in) + Na(+)(out) = 2 hydrogencarbonate(in) + chloride(out) + Na(+)(in). It catalyses the reaction K(+)(in) + 2 hydrogencarbonate(in) + chloride(out) = K(+)(out) + 2 hydrogencarbonate(out) + chloride(in). The catalysed reaction is Li(+)(in) + 2 hydrogencarbonate(in) + chloride(out) = Li(+)(out) + 2 hydrogencarbonate(out) + chloride(in). The enzyme catalyses Rb(+)(in) + 2 hydrogencarbonate(in) + chloride(out) = Rb(+)(out) + 2 hydrogencarbonate(out) + chloride(in). It carries out the reaction Cs(+)(in) + 2 hydrogencarbonate(in) + chloride(out) = Cs(+)(out) + 2 hydrogencarbonate(out) + chloride(in). Its activity is regulated as follows. 4,4'-diisothiocyanatodihydrostilbene-2,2'- disulfonic acid (H2DIDS) potently inhibits chloride/hydrogencarbonate antiporter activity with 50% inhibition at about 5 uM. Completely inhibits chloride/hydrogencarbonate antiporter activity at 200 uM of 4,4'-diisothiocyano-trans-stilbene-2,2'-disulfonic acid (DIDS). Functionally, electroneutral Cl(-)/HCO3(-) antiporter that favors chloride ion entry and efflux of hydrogencarbonate and sodium ion across the basolateral membrane and may participate in salivary secretion. Also mediates Cl(-)/HCO3(-) exchange activity in the presence of K(+) as well as Cs(+), Li(+), and Rb(+). Does not contribute to Cl(-)/HCO3(-) exchanger in the apical membrane of the upper villous epithelium. This Rattus norvegicus (Rat) protein is Anion exchange protein 4.